Here is a 137-residue protein sequence, read N- to C-terminus: MSVERTLILVKPDGVSRGLVGEVVGRLERKGLTLVALELRTLERSVAETHYGEHASKPFFGELVDFITSGPLVALVAEGPRAVEASRGLIGATDPVKAAPGSLRGDYALEIGQNLVHGSDSPESAKREIDLFFPGLS.

Positions 11, 59, 87, 93, 104, and 114 each coordinate ATP. The Pros-phosphohistidine intermediate role is filled by His-117.

This sequence belongs to the NDK family. Homotetramer. The cofactor is Mg(2+).

Its subcellular location is the cytoplasm. The catalysed reaction is a 2'-deoxyribonucleoside 5'-diphosphate + ATP = a 2'-deoxyribonucleoside 5'-triphosphate + ADP. The enzyme catalyses a ribonucleoside 5'-diphosphate + ATP = a ribonucleoside 5'-triphosphate + ADP. Its function is as follows. Major role in the synthesis of nucleoside triphosphates other than ATP. The ATP gamma phosphate is transferred to the NDP beta phosphate via a ping-pong mechanism, using a phosphorylated active-site intermediate. This is Nucleoside diphosphate kinase from Frankia casuarinae (strain DSM 45818 / CECT 9043 / HFP020203 / CcI3).